The following is a 256-amino-acid chain: uncharacterized protein (256 aa).

Residues 1-22 (MGYLKRFALYISVMILIFAIAG) form the signal peptide. The N-palmitoyl cysteine moiety is linked to residue Cys-23. Cys-23 carries the S-diacylglycerol cysteine lipid modification.

The protein belongs to the staphylococcal tandem lipoprotein family.

The protein resides in the cell membrane. This is an uncharacterized protein from Staphylococcus aureus (strain COL).